Here is a 61-residue protein sequence, read N- to C-terminus: Large ribosomal subunit protein bL28 (61 aa).

Belongs to the bacterial ribosomal protein bL28 family.

This is Large ribosomal subunit protein bL28 from Lachnospira eligens (strain ATCC 27750 / DSM 3376 / VPI C15-48 / C15-B4) (Eubacterium eligens).